Reading from the N-terminus, the 227-residue chain is Uracil-DNA glycosylase (227 aa).

The active-site Proton acceptor is the aspartate 64.

The protein belongs to the uracil-DNA glycosylase (UDG) superfamily. UNG family.

It is found in the cytoplasm. It carries out the reaction Hydrolyzes single-stranded DNA or mismatched double-stranded DNA and polynucleotides, releasing free uracil.. Functionally, excises uracil residues from the DNA which can arise as a result of misincorporation of dUMP residues by DNA polymerase or due to deamination of cytosine. The chain is Uracil-DNA glycosylase from Sodalis glossinidius (strain morsitans).